Here is a 181-residue protein sequence, read N- to C-terminus: UPF0302 protein lmo1921 (181 aa).

Belongs to the UPF0302 family.

This chain is UPF0302 protein lmo1921, found in Listeria monocytogenes serovar 1/2a (strain ATCC BAA-679 / EGD-e).